A 255-amino-acid chain; its full sequence is Adenosylcobinamide-GDP ribazoletransferase (255 aa).

Helical transmembrane passes span 33 to 53 (IFLP…IELF), 57 to 77 (FPGF…SGAL), 107 to 127 (VGSM…GSYA), 136 to 156 (FTVL…IYSF), 174 to 194 (AGLI…AAFF), 196 to 216 (FSLI…FVVA), and 234 to 254 (IMEL…NIGV).

Belongs to the CobS family. Mg(2+) is required as a cofactor.

It is found in the cell membrane. The enzyme catalyses alpha-ribazole + adenosylcob(III)inamide-GDP = adenosylcob(III)alamin + GMP + H(+). It carries out the reaction alpha-ribazole 5'-phosphate + adenosylcob(III)inamide-GDP = adenosylcob(III)alamin 5'-phosphate + GMP + H(+). Its pathway is cofactor biosynthesis; adenosylcobalamin biosynthesis; adenosylcobalamin from cob(II)yrinate a,c-diamide: step 7/7. In terms of biological role, joins adenosylcobinamide-GDP and alpha-ribazole to generate adenosylcobalamin (Ado-cobalamin). Also synthesizes adenosylcobalamin 5'-phosphate from adenosylcobinamide-GDP and alpha-ribazole 5'-phosphate. The chain is Adenosylcobinamide-GDP ribazoletransferase from Carboxydothermus hydrogenoformans (strain ATCC BAA-161 / DSM 6008 / Z-2901).